The chain runs to 465 residues: ATP synthase subunit beta (465 aa).

155–162 (GGAGVGKT) contacts ATP.

The protein belongs to the ATPase alpha/beta chains family. F-type ATPases have 2 components, CF(1) - the catalytic core - and CF(0) - the membrane proton channel. CF(1) has five subunits: alpha(3), beta(3), gamma(1), delta(1), epsilon(1). CF(0) has three main subunits: a(1), b(2) and c(9-12). The alpha and beta chains form an alternating ring which encloses part of the gamma chain. CF(1) is attached to CF(0) by a central stalk formed by the gamma and epsilon chains, while a peripheral stalk is formed by the delta and b chains.

It is found in the cell membrane. The enzyme catalyses ATP + H2O + 4 H(+)(in) = ADP + phosphate + 5 H(+)(out). Produces ATP from ADP in the presence of a proton gradient across the membrane. The catalytic sites are hosted primarily by the beta subunits. This Buchnera aphidicola subsp. Baizongia pistaciae (strain Bp) protein is ATP synthase subunit beta.